A 528-amino-acid chain; its full sequence is Alpha-amylase (528 aa).

The first 28 residues, 1–28, serve as a signal peptide directing secretion; that stretch reads MNKKWLNIPALIALLAAIAFGSVAPAEA. 2 residues coordinate Ca(2+): Asn-168 and Asp-228. The active-site Nucleophile is the Asp-258. Position 262 (His-262) interacts with Ca(2+). Glu-286 serves as the catalytic Proton donor.

The protein belongs to the glycosyl hydrolase 13 family. In terms of assembly, monomer. Ca(2+) is required as a cofactor.

It carries out the reaction Endohydrolysis of (1-&gt;4)-alpha-D-glucosidic linkages in polysaccharides containing three or more (1-&gt;4)-alpha-linked D-glucose units.. The sequence is that of Alpha-amylase from Niallia circulans (Bacillus circulans).